The following is a 63-amino-acid chain: 2-hydroxymuconate tautomerase (63 aa).

Pro2 (proton acceptor; via imino nitrogen) is an active-site residue.

This sequence belongs to the 4-oxalocrotonate tautomerase family. In terms of assembly, homohexamer.

It catalyses the reaction (2Z,4E)-2-hydroxyhexa-2,4-dienedioate = (3E)-2-oxohex-3-enedioate. Its pathway is xenobiotic degradation; toluene degradation. Its function is as follows. Catalyzes the ketonization of 2-hydroxymuconate stereoselectively to yield 2-oxo-3-hexenedioate. The sequence is that of 2-hydroxymuconate tautomerase (dmpI) from Pseudomonas sp. (strain CF600).